The following is a 299-amino-acid chain: Trimeric intracellular cation channel type A (299 aa).

The Lumenal segment spans residues 1–18; the sequence is MELLSALSLGELALSFSR. Residues 19-39 form a helical membrane-spanning segment; sequence VPLFPVFDLSYFIVSILYLKY. Residues 40 to 51 are Cytoplasmic-facing; sequence EPGAVELSRRHP. A helical transmembrane segment spans residues 52-72; it reads IASWLCAMLHCFGSYILADLL. The Lumenal segment spans residues 73-85; sequence LGEPLIDYFSNNS. Glycine 74 contacts Ca(2+). Residues 86–106 traverse the membrane as a helical segment; it reads SILLASAVWYLIFFCPLDLFY. Over 107-144 the chain is Cytoplasmic; the sequence is KCVCFLPVKLIFVAMKEVVRVRKIAVGIHHAHHHYHHG. The a 1,2-diacyl-sn-glycero-3-phospho-(1D-myo-inositol-4,5-bisphosphate) site is built by lysine 122 and arginine 126. The chain crosses the membrane as a helical span at residues 145–165; that stretch reads WFVMIATGWVKGSGVALMSNF. Topologically, residues 166-178 are lumenal; sequence EQLLRGVWKPETN. The chain crosses the membrane as a helical span at residues 179 to 199; sequence EILHMSFPTKASLYGAILFTL. Residues 200 to 209 lie on the Cytoplasmic side of the membrane; the sequence is QQTRWLPVSK. Residues 210 to 230 traverse the membrane as a helical segment; the sequence is ASLIFIFTLFMVSCKVFLTAT. Residues 231–234 are Lumenal-facing; that stretch reads HSHS. A helical membrane pass occupies residues 235–255; the sequence is SPFDALEGYICPVLFGSACGG. At 256–299 the chain is on the cytoplasmic side; the sequence is DHHHDNHGGSHSGGGPGAQHSAMPAKSKEELSEGSRKKKAKKAD. A disordered region spans residues 260–299; that stretch reads DNHGGSHSGGGPGAQHSAMPAKSKEELSEGSRKKKAKKAD. The span at 281–290 shows a compositional bias: basic and acidic residues; the sequence is KSKEELSEGS.

The protein belongs to the TMEM38 family. As to quaternary structure, homotrimer; conformation seems to be controled by binding to diacylglycerol (DAG).

Its subcellular location is the sarcoplasmic reticulum membrane. It localises to the nucleus membrane. The catalysed reaction is K(+)(in) = K(+)(out). Its activity is regulated as follows. Channel activity is activated by a change of voltage within the sarcoplasmic reticulum lumen and blocked by luminal high Ca(2+) levels. Functionally, intracellular monovalent cation channel required for maintenance of rapid intracellular calcium release. Acts as a potassium counter-ion channel that functions in synchronization with calcium release from intracellular stores. Opened by a change of voltage within the sarcoplasmic reticulum lumen. This Homo sapiens (Human) protein is Trimeric intracellular cation channel type A.